The following is a 236-amino-acid chain: UPF0257 lipoprotein YnfC (236 aa).

The N-terminal stretch at 1–16 (MKYKLLPCLLAILLTG) is a signal peptide. The N-palmitoyl cysteine moiety is linked to residue cysteine 17. Cysteine 17 carries the S-diacylglycerol cysteine lipid modification.

The protein belongs to the UPF0257 family.

The protein localises to the cell membrane. The sequence is that of UPF0257 lipoprotein YnfC from Escherichia coli O45:K1 (strain S88 / ExPEC).